The chain runs to 100 residues: Small ribosomal subunit protein bS20 (100 aa).

Residues 1–22 show a composition bias toward basic residues; the sequence is MASGKPKKKNPRLASGRKRARQ. A disordered region spans residues 1–26; that stretch reads MASGKPKKKNPRLASGRKRARQGLKL.

It belongs to the bacterial ribosomal protein bS20 family.

Binds directly to 16S ribosomal RNA. This Acidovorax ebreus (strain TPSY) (Diaphorobacter sp. (strain TPSY)) protein is Small ribosomal subunit protein bS20.